The sequence spans 101 residues: Protein S100-A4 (101 aa).

The residue at position 2 (Ala-2) is an N-acetylalanine. EF-hand domains lie at 12–47 (IVST…SFLG) and 50–85 (TDEA…IAMM). Ca(2+) is bound by residues Lys-28 and Glu-33. N6-acetyllysine is present on Lys-35. The Ca(2+) site is built by Asp-63, Asn-65, Asp-67, Glu-69, and Glu-74.

The protein belongs to the S-100 family. In terms of assembly, homodimer. Interacts with PPFIBP1 in a calcium-dependent mode. Interacts with PGLYRP1; this complex acts as a chemoattractant that promotes lymphocyte movement. Interacts with MYH9; this interaction increases cell motility. Interacts with Annexin 2/ANXA2. Interacts with TP53; this interaction promotes TP53 degradation. Interacts with CCR5 and CXCR3. Interacts with FCGR3A; this interaction inhibits PKC-dependent phosphorylation of FCGR3A. Specifically expressed in different metastatic cells.

The protein localises to the secreted. It localises to the nucleus. The protein resides in the cytoplasm. Its function is as follows. Calcium-binding protein that plays a role in various cellular processes including motility, angiogenesis, cell differentiation, apoptosis, and autophagy. Increases cell motility and invasiveness by interacting with non-muscle myosin heavy chain (NMMHC) IIA/MYH9. Mechanistically, promotes filament depolymerization and increases the amount of soluble myosin-IIA, resulting in the formation of stable protrusions facilitating chemotaxis. Also modulates the pro-apoptotic function of TP53 by binding to its C-terminal transactivation domain within the nucleus and reducing its protein levels. Within the extracellular space, stimulates cytokine production including granulocyte colony-stimulating factor and CCL24 from T-lymphocytes. In addition, stimulates T-lymphocyte chemotaxis by acting as a chemoattractant complex with PGLYRP1 that promotes lymphocyte migration via CCR5 and CXCR3 receptors. The polypeptide is Protein S100-A4 (S100a4) (Mus musculus (Mouse)).